A 267-amino-acid polypeptide reads, in one-letter code: MEDAVTMDTAFEDKPLVVAGRTFTSRLIIGTGKYKTYAQNAQALEASGAEMITVAIRRVNLSNPDEPRLVDFISPDDYTFLPNTAGCFTGEDAVRTLRLAREAGGWNLVKLEVLSDPKHLYPDMAETLRAAELLIKDGFDVMVYCSDDPVYARKLEEIGCCAIMPLGAPIGSGLGIQNPVNIRLIIEQTKVPVIVDAGVGTASDATVAMELGCDGVLMNTAIAEAKDPIRMARAMRHAVIAGRESYLAGRMPKKRYADPSSPLSGLI.

Residue K110 is the Schiff-base intermediate with DXP of the active site. Residues G171, 197–198 (AG), and 219–220 (NT) contribute to the 1-deoxy-D-xylulose 5-phosphate site.

This sequence belongs to the ThiG family. In terms of assembly, homotetramer. Forms heterodimers with either ThiH or ThiS.

It localises to the cytoplasm. The catalysed reaction is [ThiS sulfur-carrier protein]-C-terminal-Gly-aminoethanethioate + 2-iminoacetate + 1-deoxy-D-xylulose 5-phosphate = [ThiS sulfur-carrier protein]-C-terminal Gly-Gly + 2-[(2R,5Z)-2-carboxy-4-methylthiazol-5(2H)-ylidene]ethyl phosphate + 2 H2O + H(+). The protein operates within cofactor biosynthesis; thiamine diphosphate biosynthesis. Functionally, catalyzes the rearrangement of 1-deoxy-D-xylulose 5-phosphate (DXP) to produce the thiazole phosphate moiety of thiamine. Sulfur is provided by the thiocarboxylate moiety of the carrier protein ThiS. In vitro, sulfur can be provided by H(2)S. The sequence is that of Thiazole synthase from Maricaulis maris (strain MCS10) (Caulobacter maris).